Here is a 288-residue protein sequence, read N- to C-terminus: Solute carrier family 25 member 45 (288 aa).

Solcar repeat units lie at residues 1 to 83, 97 to 191, and 199 to 286; these read MPVE…TLLV, PSYM…LCRQ, and PSSA…LLRW. The next 6 helical transmembrane spans lie at 6–26, 63–83, 100–120, 166–186, 202–222, and 266–286; these read FVAGWISGALGLVLGHPFDTV, IASIAVVNSVLFGVYSNTLLV, MHIFLAGCTGGFLQAYCLAPF, GAWALTLRDTPTVGIYFITYE, ATVLVAGGFAGIASWVAATPL, and SARAFPVNAVTFLSYEYLLRW.

The protein belongs to the mitochondrial carrier (TC 2.A.29) family.

Its subcellular location is the mitochondrion inner membrane. The protein is Solute carrier family 25 member 45 (SLC25A45) of Homo sapiens (Human).